We begin with the raw amino-acid sequence, 207 residues long: Superoxide dismutase [Mn] (207 aa).

Residues H28, H76, D160, and H164 each contribute to the Mn(2+) site.

This sequence belongs to the iron/manganese superoxide dismutase family. Mn(2+) is required as a cofactor.

It carries out the reaction 2 superoxide + 2 H(+) = H2O2 + O2. In terms of biological role, destroys superoxide anion radicals which are normally produced within the cells and which are toxic to biological systems. In Mycolicibacterium fortuitum (Mycobacterium fortuitum), this protein is Superoxide dismutase [Mn] (sodA).